The sequence spans 410 residues: Putative ribosomal large subunit pseudouridine synthase SVR1, chloroplastic (410 aa).

The transit peptide at 1–35 (MASVAASSSISFAASFLKIKAFPLSPRFFPIRTLR) directs the protein to the chloroplast. Positions 96-143 (HNLAIDATTQNPKKKDKSKKKQPQATSSSSATTTASSPASHSEVKPKL) are disordered. Residues 107 to 117 (PKKKDKSKKKQ) show a composition bias toward basic residues. The span at 118–135 (PQATSSSSATTTASSPAS) shows a compositional bias: low complexity. The S4 RNA-binding domain maps to 160-229 (QRLSKVLAAA…PKVYFALNKP (70 aa)). D274 functions as the Nucleophile in the catalytic mechanism.

This sequence belongs to the pseudouridine synthase RsuA family. As to expression, highly expressed in young seedlings. Expressed in roots, rosette leaves, cauline leaves, stems and flowers.

Its subcellular location is the plastid. The protein resides in the chloroplast. Responsible for synthesis of pseudouridine in chloroplastic 23S ribosomal RNA. Necessary for normal chloroplast rRNA processing and translation. Required for normal chloroplast development and maintenance. May function in other plastids, such as root amyloplasts. In Arabidopsis thaliana (Mouse-ear cress), this protein is Putative ribosomal large subunit pseudouridine synthase SVR1, chloroplastic (SVR1).